A 119-amino-acid chain; its full sequence is Large ribosomal subunit protein uL22 (119 aa).

This sequence belongs to the universal ribosomal protein uL22 family. Part of the 50S ribosomal subunit.

This protein binds specifically to 23S rRNA; its binding is stimulated by other ribosomal proteins, e.g. L4, L17, and L20. It is important during the early stages of 50S assembly. It makes multiple contacts with different domains of the 23S rRNA in the assembled 50S subunit and ribosome. Functionally, the globular domain of the protein is located near the polypeptide exit tunnel on the outside of the subunit, while an extended beta-hairpin is found that lines the wall of the exit tunnel in the center of the 70S ribosome. This is Large ribosomal subunit protein uL22 from Bifidobacterium adolescentis (strain ATCC 15703 / DSM 20083 / NCTC 11814 / E194a).